The following is a 288-amino-acid chain: 4-diphosphocytidyl-2-C-methyl-D-erythritol kinase (288 aa).

Lys-22 is an active-site residue. Position 104–114 (104–114 (PSQAGLGGGSS)) interacts with ATP. Asp-146 is a catalytic residue.

The protein belongs to the GHMP kinase family. IspE subfamily.

It catalyses the reaction 4-CDP-2-C-methyl-D-erythritol + ATP = 4-CDP-2-C-methyl-D-erythritol 2-phosphate + ADP + H(+). It functions in the pathway isoprenoid biosynthesis; isopentenyl diphosphate biosynthesis via DXP pathway; isopentenyl diphosphate from 1-deoxy-D-xylulose 5-phosphate: step 3/6. Functionally, catalyzes the phosphorylation of the position 2 hydroxy group of 4-diphosphocytidyl-2C-methyl-D-erythritol. This chain is 4-diphosphocytidyl-2-C-methyl-D-erythritol kinase, found in Protochlamydia amoebophila (strain UWE25).